We begin with the raw amino-acid sequence, 121 residues long: Large ribosomal subunit protein bL21 (121 aa).

Belongs to the bacterial ribosomal protein bL21 family. In terms of assembly, part of the 50S ribosomal subunit. Contacts protein L20.

In terms of biological role, this protein binds to 23S rRNA in the presence of protein L20. The sequence is that of Large ribosomal subunit protein bL21 from Gloeobacter violaceus (strain ATCC 29082 / PCC 7421).